The chain runs to 237 residues: Phosphoribosylaminoimidazole-succinocarboxamide synthase (237 aa).

Belongs to the SAICAR synthetase family.

It carries out the reaction 5-amino-1-(5-phospho-D-ribosyl)imidazole-4-carboxylate + L-aspartate + ATP = (2S)-2-[5-amino-1-(5-phospho-beta-D-ribosyl)imidazole-4-carboxamido]succinate + ADP + phosphate + 2 H(+). It functions in the pathway purine metabolism; IMP biosynthesis via de novo pathway; 5-amino-1-(5-phospho-D-ribosyl)imidazole-4-carboxamide from 5-amino-1-(5-phospho-D-ribosyl)imidazole-4-carboxylate: step 1/2. This is Phosphoribosylaminoimidazole-succinocarboxamide synthase from Oceanobacillus iheyensis (strain DSM 14371 / CIP 107618 / JCM 11309 / KCTC 3954 / HTE831).